The chain runs to 884 residues: MAPSASAATNGYDVDRLLAGYRTARAQETLFDLRDGPGAGYDEFVDDDGNVRPTWTELADAVAERGKAGLDRLRSVVHSLIDHDGITYTAIDAHRDALTGDHDLEPGPWRLDPLPLVISAADWEVLEAGLVQRSRLLDAILADLYGPRSMLTEGVLPPEMLFAHPGYVRAANGIQMPGRHQLFMHACDLSRLPDGTFQVNADWTQAPSGSGYAMADRRVVAHAVPDLYEELAPRPTTPFAQALRLALIDAAPDVAQDPVVVVLSPGIYSETAFDQAYLATLLGFPLVESADLVVRDGKLWMRSLGTLKRVDVVLRRVDAHYADPLDLRADSRLGVVGLVEAQHRGTVTVVNTLGSGILENPGLLRFLPQLSERLLDESPLLHTAPVYWGGIASERSHLLANVSSLLIKSTVSGETLVGPTLSSAQLADLAVRIEAMPWQWVGQELPQFSSAPTNHAGVLSSAGVGMRLFTVAQRSGYAPMIGGLGYVLAPGPAAYTLKTVAAKDIWVRPTERAHAEVITVPVLAPPAKTGAGTWAVSSPRVLSDLFWMGRYGERAENMARLLIVTRERYHVFRHQQDTDESECVPVLMAALGKITGYDTATGAGSAYDRADMIAVAPSTLWSLTVDPDRPGSLVQSVEGLALAARAVRDQLSNDTWMVLANVERAVEHKSDPPQSLAEADAVLASAQAETLAGMLTLSGVAGESMVHDVGWTMMDIGKRIERGLWLTALLQATLSTVRHPAAEQAIIEATLVACESSVIYRRRTVGKFSVAAVTELMLFDAQNPRSLVYQLERLRADLKDLPGSSGSSRPERMVDEMNTRLRRSHPEELEEVSADGLRAELAELLAGIHASLRDVADVLTATQLALPGGMQPLWGPDQRRVMPA.

This is an uncharacterized protein from Mycobacterium bovis (strain ATCC BAA-935 / AF2122/97).